We begin with the raw amino-acid sequence, 458 residues long: V-type ATP synthase beta chain (458 aa).

This sequence belongs to the ATPase alpha/beta chains family.

Produces ATP from ADP in the presence of a proton gradient across the membrane. The V-type beta chain is a regulatory subunit. In Fusobacterium nucleatum subsp. nucleatum (strain ATCC 25586 / DSM 15643 / BCRC 10681 / CIP 101130 / JCM 8532 / KCTC 2640 / LMG 13131 / VPI 4355), this protein is V-type ATP synthase beta chain.